Here is a 214-residue protein sequence, read N- to C-terminus: Pyrrolidone-carboxylate peptidase (214 aa).

Active-site residues include E80, C143, and H166.

It belongs to the peptidase C15 family. Homotetramer.

The protein localises to the cytoplasm. The enzyme catalyses Release of an N-terminal pyroglutamyl group from a polypeptide, the second amino acid generally not being Pro.. Its function is as follows. Removes 5-oxoproline from various penultimate amino acid residues except L-proline. The protein is Pyrrolidone-carboxylate peptidase of Enterobacter sp. (strain 638).